Reading from the N-terminus, the 343-residue chain is Holliday junction branch migration complex subunit RuvB (343 aa).

Residues 1–26 (MKEKILTFSSDPSSPVTRHETEEDTG) are disordered. Residues 3-193 (EKILTFSSDP…FGIFRKFDFY (191 aa)) are large ATPase domain (RuvB-L). A compositionally biased stretch (polar residues) spans 7 to 16 (TFSSDPSSPV). ATP-binding positions include leucine 32, arginine 33, glycine 74, lysine 77, threonine 78, threonine 79, 140-142 (EDF), arginine 183, tyrosine 193, and arginine 230. Threonine 78 is a Mg(2+) binding site. Positions 194-264 (SRQDLARIVS…AIDDALALEG (71 aa)) are small ATPAse domain (RuvB-S). The segment at 267–343 (EKGLTGLDRS…YRHLGVQWRG (77 aa)) is head domain (RuvB-H). The DNA site is built by arginine 322 and arginine 327.

This sequence belongs to the RuvB family. Homohexamer. Forms an RuvA(8)-RuvB(12)-Holliday junction (HJ) complex. HJ DNA is sandwiched between 2 RuvA tetramers; dsDNA enters through RuvA and exits via RuvB. An RuvB hexamer assembles on each DNA strand where it exits the tetramer. Each RuvB hexamer is contacted by two RuvA subunits (via domain III) on 2 adjacent RuvB subunits; this complex drives branch migration. In the full resolvosome a probable DNA-RuvA(4)-RuvB(12)-RuvC(2) complex forms which resolves the HJ.

It localises to the cytoplasm. The catalysed reaction is ATP + H2O = ADP + phosphate + H(+). Functionally, the RuvA-RuvB-RuvC complex processes Holliday junction (HJ) DNA during genetic recombination and DNA repair, while the RuvA-RuvB complex plays an important role in the rescue of blocked DNA replication forks via replication fork reversal (RFR). RuvA specifically binds to HJ cruciform DNA, conferring on it an open structure. The RuvB hexamer acts as an ATP-dependent pump, pulling dsDNA into and through the RuvAB complex. RuvB forms 2 homohexamers on either side of HJ DNA bound by 1 or 2 RuvA tetramers; 4 subunits per hexamer contact DNA at a time. Coordinated motions by a converter formed by DNA-disengaged RuvB subunits stimulates ATP hydrolysis and nucleotide exchange. Immobilization of the converter enables RuvB to convert the ATP-contained energy into a lever motion, pulling 2 nucleotides of DNA out of the RuvA tetramer per ATP hydrolyzed, thus driving DNA branch migration. The RuvB motors rotate together with the DNA substrate, which together with the progressing nucleotide cycle form the mechanistic basis for DNA recombination by continuous HJ branch migration. Branch migration allows RuvC to scan DNA until it finds its consensus sequence, where it cleaves and resolves cruciform DNA. The protein is Holliday junction branch migration complex subunit RuvB of Desulfosudis oleivorans (strain DSM 6200 / JCM 39069 / Hxd3) (Desulfococcus oleovorans).